The primary structure comprises 204 residues: Guanylate kinase (204 aa).

The region spanning 18 to 196 (PKLFTISAPA…SYEILKSIFI (179 aa)) is the Guanylate kinase-like domain. 25–32 (APAGAGKT) contributes to the ATP binding site.

The protein belongs to the guanylate kinase family.

It localises to the cytoplasm. The catalysed reaction is GMP + ATP = GDP + ADP. Essential for recycling GMP and indirectly, cGMP. The polypeptide is Guanylate kinase (Chlamydia caviae (strain ATCC VR-813 / DSM 19441 / 03DC25 / GPIC) (Chlamydophila caviae)).